The sequence spans 686 residues: Lysophospholipase 3 (686 aa).

An N-terminal signal peptide occupies residues 1–26; that stretch reads MIRPLCSKIIISYIFAISQFLLAANA. A PLA2c domain is found at 39–592; the sequence is SCPDDINLVR…KNYCWNGTLD (554 aa). N56, N82, N129, N166, N221, N283, N313, N351, N495, N519, N547, N571, N588, and N614 each carry an N-linked (GlcNAc...) asparagine glycan. The GPI-anchor amidated asparagine moiety is linked to residue N659. Positions 660-686 are cleaved as a propeptide — removed in mature form; it reads SGSHLSGISVKFSAMIMLTLLMFTGAV.

The protein belongs to the lysophospholipase family.

The protein resides in the cell membrane. It carries out the reaction a 1-acyl-sn-glycero-3-phosphocholine + H2O = sn-glycerol 3-phosphocholine + a fatty acid + H(+). Its function is as follows. Sequentially removes both fatty acyl groups from diacylglycerophospholipids and therefore has both phospholipase A and lysophospholipase activities. Substrate preference is phosphatidylserine &gt; phosphatidylinositol. Does not cleave phosphatidylcholine, phosphatidylethanolamine, phosphatidic acid and phosphatidylinositol-bisphosphate. Mainly responsible for the degradation of phosphatidylinositol in vivo. The protein is Lysophospholipase 3 (PLB3) of Saccharomyces cerevisiae (strain ATCC 204508 / S288c) (Baker's yeast).